Consider the following 837-residue polypeptide: Protein translocase subunit SecA (837 aa).

ATP is bound by residues glutamine 85, 103–107 (GEGKT), and aspartate 493. Zn(2+) is bound by residues cysteine 821, cysteine 823, cysteine 832, and histidine 833.

The protein belongs to the SecA family. As to quaternary structure, monomer and homodimer. Part of the essential Sec protein translocation apparatus which comprises SecA, SecYEG and auxiliary proteins SecDF. Other proteins may also be involved. Zn(2+) is required as a cofactor.

Its subcellular location is the cell membrane. The protein resides in the cytoplasm. It catalyses the reaction ATP + H2O + cellular proteinSide 1 = ADP + phosphate + cellular proteinSide 2.. Part of the Sec protein translocase complex. Interacts with the SecYEG preprotein conducting channel. Has a central role in coupling the hydrolysis of ATP to the transfer of proteins into and across the cell membrane, serving as an ATP-driven molecular motor driving the stepwise translocation of polypeptide chains across the membrane. The protein is Protein translocase subunit SecA of Streptococcus pneumoniae (strain P1031).